The sequence spans 533 residues: Intestinal-type alkaline phosphatase (533 aa).

The first 19 residues, 1-19 (MQGACVLLLLGLHLQLSLG), serve as a signal peptide directing secretion. Asp-61 serves as a coordination point for Mg(2+). Residues Asp-61 and Ser-111 each coordinate Zn(2+). Ser-111 functions as the Phosphoserine intermediate in the catalytic mechanism. A disulfide bond links Cys-140 and Cys-202. Ser-174 provides a ligand contact to Mg(2+). Residue Glu-235 coordinates Ca(2+). The N-linked (GlcNAc...) asparagine glycan is linked to Asn-268. Ca(2+)-binding residues include Phe-288, Glu-289, and Asp-304. Glu-330 is a binding site for Mg(2+). Residues Asp-335, His-339, Asp-376, and His-377 each coordinate Zn(2+). N-linked (GlcNAc...) asparagine glycosylation occurs at Asn-429. His-451 lines the Zn(2+) pocket. Cys-486 and Cys-493 form a disulfide bridge. Residue Asp-506 is the site of GPI-anchor amidated aspartate attachment. Residues 507-533 (AAHLAASPPPLALLAGAMLLLLAPTLY) constitute a propeptide, removed in mature form.

This sequence belongs to the alkaline phosphatase family. Homodimer. Mg(2+) serves as cofactor. The cofactor is Zn(2+). Requires Ca(2+) as cofactor.

The protein resides in the cell membrane. It carries out the reaction a phosphate monoester + H2O = an alcohol + phosphate. Functionally, alkaline phosphatase that can hydrolyze various phosphate compounds. This chain is Intestinal-type alkaline phosphatase (ALPI), found in Bos taurus (Bovine).